We begin with the raw amino-acid sequence, 137 residues long: Small ribosomal subunit protein uS11 (137 aa).

The segment at 116-137 is disordered; that stretch reads EDVTPVPSDSTRKKGGRRGRRL. Residues 128-137 are compositionally biased toward basic residues; it reads KKGGRRGRRL.

It belongs to the universal ribosomal protein uS11 family.

The sequence is that of Small ribosomal subunit protein uS11 (RPS14) from Kluyveromyces lactis (strain ATCC 8585 / CBS 2359 / DSM 70799 / NBRC 1267 / NRRL Y-1140 / WM37) (Yeast).